The sequence spans 237 residues: MKVDLHVHSIVSKCSLNPKGLLEKFCIKKNIVPAICDHNKLTKLNFAIPGEEIATNSGEFIGLFLTEEIPANLDLYEALDRVREQGALIYLPHPFDLNRRRSLAKFNVLEEREFLKYVHVVEVFNSRCRSIEPNLKALEYAEKYDFAMAFGSDAHFIWEVGNAYIKFSELNIEKPDDLSPKEFLNLLKIKTDELLKAKSNLLKNPWKTRWHYGKLGSKYNIALYSKVVKNVRRKLNI.

This is an uncharacterized protein from Methanocaldococcus jannaschii (strain ATCC 43067 / DSM 2661 / JAL-1 / JCM 10045 / NBRC 100440) (Methanococcus jannaschii).